The chain runs to 618 residues: MESNLSAKGIFQHASANASGELFQEPVTEDLEKVMQSKGLYSMEELCSIIQEAYAPRVSVLCSRDADEFAMRKGYPKGFWELLYPFGDRIRGKVNRRGMNGEMLTLENLNLHFVPIDALESHLSEASFPSLRSVLCERYPGLVSPEPPSDYSFGVHYKNVERWAWTLAHEGNYQMPLPVYVRQLLTGIPITPFETFSHPVAHLVVVTSHNPSPFESLRSLINSIPYLSLPAFVFNDINYLFVYVHDEDQHDLELSMAIFDTMKQTFGDCGYFLRLHSQKATLDYEHTVPFPTSSWLSAEERLHLLSNTDTEIRLLFESDNESLRRLSSHIAFNGIVSYLDKCVRAWDDQYASPRRGITGKLLFASRKYLSSSNASTNSNYFPSSNAYRPFSPEAYLRKLADYSFMLRDYSHANQIYEIASRQYENDGACLYSAASLEMIVITEHILHLKMPYMSLTNTLRINEYMQSAMLNYLNKSFNSYYHAARCFLLLGQFLSCLPAPKVDDAANWNAGLLYSKRLGPVGRAMIFQQTHTLFKSLSYLKTESTDPFSNKRTRKAALWCVLTADAWLRCRIPFRAKPFVEEAKLFYGKIDWKDLKECVAALDEVEVSKQPASNIPSS.

The protein belongs to the TRS85 family. Part of the multisubunit TRAPP (transport protein particle) complexes I and II.

The protein localises to the golgi apparatus. It localises to the cis-Golgi network. Component of the TRAPP I and TRAPP II complexes. TRAPP I plays a key role in the late stages of endoplasmic reticulum to Golgi traffic. TRAPP II seems to play a role in intra-Golgi transport. Has a role late in meiosis following DNA replication. The protein is Transport protein particle subunit trs85-2 (trs85-2) of Schizosaccharomyces pombe (strain 972 / ATCC 24843) (Fission yeast).